The following is a 95-amino-acid chain: Aspartyl/glutamyl-tRNA(Asn/Gln) amidotransferase subunit C (95 aa).

Belongs to the GatC family. Heterotrimer of A, B and C subunits.

It catalyses the reaction L-glutamyl-tRNA(Gln) + L-glutamine + ATP + H2O = L-glutaminyl-tRNA(Gln) + L-glutamate + ADP + phosphate + H(+). The catalysed reaction is L-aspartyl-tRNA(Asn) + L-glutamine + ATP + H2O = L-asparaginyl-tRNA(Asn) + L-glutamate + ADP + phosphate + 2 H(+). Functionally, allows the formation of correctly charged Asn-tRNA(Asn) or Gln-tRNA(Gln) through the transamidation of misacylated Asp-tRNA(Asn) or Glu-tRNA(Gln) in organisms which lack either or both of asparaginyl-tRNA or glutaminyl-tRNA synthetases. The reaction takes place in the presence of glutamine and ATP through an activated phospho-Asp-tRNA(Asn) or phospho-Glu-tRNA(Gln). The protein is Aspartyl/glutamyl-tRNA(Asn/Gln) amidotransferase subunit C of Campylobacter fetus subsp. fetus (strain 82-40).